The following is a 417-amino-acid chain: Serine hydroxymethyltransferase (417 aa).

(6S)-5,6,7,8-tetrahydrofolate-binding positions include L121 and 125–127; that span reads GHL. K229 carries the N6-(pyridoxal phosphate)lysine modification. A (6S)-5,6,7,8-tetrahydrofolate-binding site is contributed by 355–357; sequence SPF.

The protein belongs to the SHMT family. In terms of assembly, homodimer. Pyridoxal 5'-phosphate is required as a cofactor.

It localises to the cytoplasm. The enzyme catalyses (6R)-5,10-methylene-5,6,7,8-tetrahydrofolate + glycine + H2O = (6S)-5,6,7,8-tetrahydrofolate + L-serine. It participates in one-carbon metabolism; tetrahydrofolate interconversion. It functions in the pathway amino-acid biosynthesis; glycine biosynthesis; glycine from L-serine: step 1/1. Functionally, catalyzes the reversible interconversion of serine and glycine with tetrahydrofolate (THF) serving as the one-carbon carrier. This reaction serves as the major source of one-carbon groups required for the biosynthesis of purines, thymidylate, methionine, and other important biomolecules. Also exhibits THF-independent aldolase activity toward beta-hydroxyamino acids, producing glycine and aldehydes, via a retro-aldol mechanism. This Enterobacter sp. (strain 638) protein is Serine hydroxymethyltransferase.